The chain runs to 179 residues: Large ribosomal subunit protein uL5 (179 aa).

Belongs to the universal ribosomal protein uL5 family. As to quaternary structure, part of the 50S ribosomal subunit; part of the 5S rRNA/L5/L18/L25 subcomplex. Contacts the 5S rRNA and the P site tRNA. Forms a bridge to the 30S subunit in the 70S ribosome.

This is one of the proteins that bind and probably mediate the attachment of the 5S RNA into the large ribosomal subunit, where it forms part of the central protuberance. In the 70S ribosome it contacts protein S13 of the 30S subunit (bridge B1b), connecting the 2 subunits; this bridge is implicated in subunit movement. Contacts the P site tRNA; the 5S rRNA and some of its associated proteins might help stabilize positioning of ribosome-bound tRNAs. This chain is Large ribosomal subunit protein uL5, found in Halorhodospira halophila (strain DSM 244 / SL1) (Ectothiorhodospira halophila (strain DSM 244 / SL1)).